Consider the following 658-residue polypeptide: Glycogen debranching enzyme (658 aa).

Asp335 serves as the catalytic Nucleophile. Catalysis depends on Glu370, which acts as the Proton donor. Residues 457-468 (NDANGEGNRDGT) are compositionally biased toward basic and acidic residues. Positions 457-481 (NDANGEGNRDGTDSNFSNNHGTEGL) are disordered.

This sequence belongs to the glycosyl hydrolase 13 family.

The enzyme catalyses Hydrolysis of (1-&gt;6)-alpha-D-glucosidic linkages to branches with degrees of polymerization of three or four glucose residues in limit dextrin.. The protein operates within glycan degradation; glycogen degradation. In terms of biological role, removes maltotriose and maltotetraose chains that are attached by 1,6-alpha-linkage to the limit dextrin main chain, generating a debranched limit dextrin. The protein is Glycogen debranching enzyme of Pectobacterium atrosepticum (strain SCRI 1043 / ATCC BAA-672) (Erwinia carotovora subsp. atroseptica).